The primary structure comprises 363 residues: MASRLLHRLRHALASDGPGEAAAGPEAEQFPESSELEDDDAEGLSSRLSGTLSFTSAEDDPDDEDEDDEAGLDSPPSGDGASGEDAERSPPPDGQRSSQLLARQLQDFWKKSRNTLVPQRLLFEVTSANVVKDPPSKYVLYTLAVMGPGPPDRQPAQISRRYSDFERLHRNLQRQFRGPMSAISFPRKRLRRNFTAETIARRSRAFEQFLGHLQAVPELRQAPDLQDFFVLPELRRAQSLTCTGLYREALALWANAWQLQTQLGTPSGPDRPLLTLAGLAVCHQELEDPGEARACSEKALQLLGDKRPHPFLAPFLEAHVRLSWRLGLDKRQSEAQLQALQEAGLTSTPPPSLKELLIKEVLD.

Positions 1–11 (MASRLLHRLRH) are enriched in basic residues. Positions 1–99 (MASRLLHRLR…PPPDGQRSSQ (99 aa)) are disordered. Low complexity predominate over residues 12-28 (ALASDGPGEAAAGPEAE). Residues 46–56 (SRLSGTLSFTS) are compositionally biased toward polar residues. Residues 57–71 (AEDDPDDEDEDDEAG) show a composition bias toward acidic residues. Residues 119 to 236 (QRLLFEVTSA…DFFVLPELRR (118 aa)) enclose the PX domain. Residues R161, S163, K188, and R202 each contribute to the a 1,2-diacyl-sn-glycero-3-phospho-(1D-myo-inositol-3-phosphate) site.

It belongs to the sorting nexin family. In terms of assembly, monomer.

Its subcellular location is the cytoplasmic vesicle membrane. It is found in the early endosome membrane. In terms of biological role, binds to membranes enriched in phosphatidylinositol 3-phosphate (PtdIns(P3)) and phosphatidylinositol 4,5-bisphosphate. May be involved in several stages of intracellular trafficking. The polypeptide is Sorting nexin-21 (Mus musculus (Mouse)).